The chain runs to 307 residues: Transcriptional repressor scratch 2 (307 aa).

The tract at residues 1-20 is SNAG domain; sequence MPRSFLVKKIKGDGFQCSGV. Disordered stretches follow at residues 34–90 and 116–148; these read LPGA…PQSS and GRSRRRRGGGGGDAGGSGDAGGAGGRAGRAGAQ. Residues 124 to 148 are compositionally biased toward gly residues; that stretch reads GGGGDAGGSGDAGGAGGRAGRAGAQ. 4 C2H2-type zinc fingers span residues 155–177, 186–208, 212–234, and 240–262; these read HACAECGKTYATSSNLSRHKQTH, RKCPTCGKAYVSMPALAMHLLTH, HKCGVCGKAFSRPWLLQGHMRSH, and FGCAHCGKAFADRSNLRAHMQTH. The segment at 268–291 adopts a C2H2-type 5; atypical zinc-finger fold; sequence YRCRQCDKSFALKSYLHKHCEAAC.

The protein belongs to the snail C2H2-type zinc-finger protein family.

The protein localises to the nucleus. In terms of biological role, may be involved in transcriptional regulation. The chain is Transcriptional repressor scratch 2 (SCRT2) from Homo sapiens (Human).